A 176-amino-acid chain; its full sequence is ATP-dependent protease subunit HslV (176 aa).

Thr2 is a catalytic residue. Na(+) contacts are provided by Gly157, Cys160, and Thr163.

The protein belongs to the peptidase T1B family. HslV subfamily. In terms of assembly, a double ring-shaped homohexamer of HslV is capped on each side by a ring-shaped HslU homohexamer. The assembly of the HslU/HslV complex is dependent on binding of ATP.

It localises to the cytoplasm. It carries out the reaction ATP-dependent cleavage of peptide bonds with broad specificity.. Allosterically activated by HslU binding. In terms of biological role, protease subunit of a proteasome-like degradation complex believed to be a general protein degrading machinery. In Marinobacter nauticus (strain ATCC 700491 / DSM 11845 / VT8) (Marinobacter aquaeolei), this protein is ATP-dependent protease subunit HslV.